The primary structure comprises 215 residues: FGFR1 oncogene partner 2 homolog (215 aa).

The stretch at 12 to 186 (AKELVERLRE…REILQITKIS (175 aa)) forms a coiled coil. The disordered stretch occupies residues 193 to 215 (EDASENSPHSAPVPNTDLILRKS).

This sequence belongs to the SIKE family.

The protein localises to the cytoplasm. The polypeptide is FGFR1 oncogene partner 2 homolog (fgfr1op2) (Xenopus laevis (African clawed frog)).